We begin with the raw amino-acid sequence, 270 residues long: Protein-ADP-ribose hydrolase (270 aa).

A Macro domain is found at 73–267; that stretch reads VSVKDCQKTN…LYDTYLQKEN (195 aa). Positions 92, 93, and 106 each coordinate ADP-D-ribose. Zn(2+)-binding residues include C112, H117, and C119. C119, I120, D121, S212, T213, G214, E215, and F216 together coordinate ADP-D-ribose.

The protein belongs to the MacroD-type family. Zn-Macro subfamily. Requires Zn(2+) as cofactor.

The catalysed reaction is 4-O-(ADP-D-ribosyl)-L-aspartyl-[protein] + H2O = L-aspartyl-[protein] + ADP-D-ribose + H(+). In terms of biological role, ADP-ribosylhydrolase that specifically reverses the SirTM-mediated mono-ADP-ribosylation at an asparatate residue of GcvH-L, by releasing ADP-ribose from the target protein. May play a role in the regulation of the response to host-induced oxidative stress. The chain is Protein-ADP-ribose hydrolase from Streptococcus pyogenes serotype M18 (strain MGAS8232).